The primary structure comprises 446 residues: Chromogranin-A (446 aa).

The N-terminal stretch at 1–16 is a signal peptide; the sequence is SAAALALLLCAGQVIA. A disulfide bond links C33 and C54. Positions 85–426 are disordered; that stretch reads AKERSHQQKK…RPEDQELESL (342 aa). Residue S97 is modified to Phosphoserine. Over residues 105 to 138 the composition is skewed to basic and acidic residues; it reads VLEKQNDQAELKEGTEEASSKEAAEKRGDSKEVE. The segment covering 160 to 171 has biased composition (acidic residues); sequence EAEDQTPGEEEA. S209 is subject to Phosphoserine. Over residues 226–243 the composition is skewed to basic and acidic residues; the sequence is AGEKAVPEEEGPRSEAFD. S286 carries the phosphoserine modification. The residue at position 304 (G304) is a Glycine amide. S319 bears the Phosphoserine mark. Positions 319–346 are enriched in basic and acidic residues; sequence SEEWENAKRWSKMDRLAKELTAEKRLQG. The segment covering 347-357 has biased composition (acidic residues); sequence EEEEEEEEEDP. S360 carries the post-translational modification Phosphoserine. M361 carries the methionine sulfoxide modification. Residues S387, S391, S413, and S427 each carry the phosphoserine modification. The span at 403-420 shows a compositional bias: basic and acidic residues; that stretch reads YLEEKKEEEGSANRRPED. A glycan (O-linked (Xyl...) (chondroitin sulfate) serine) is linked at S413.

Belongs to the chromogranin/secretogranin protein family. As to quaternary structure, self-interacts; self-assembly is promoted in vitro by chondroitin sulfate attachment which occurs at mildly acidic pH conditions. Interacts with SCG3. Interacts with ITPR1 in the secretory granules. Post-translationally, O-glycosylated; contains chondroitin sulfate (CS). CS attachment is pH-dependent, being observed at mildly acidic conditions of pH 5 but not at neutral pH, and promotes self-assembly in vitro. In terms of processing, parathyroid CHGA is sulfated on tyrosine residues, whereas adrenal CHGA seems to be mainly sulfated on oligosaccharide residues.

The protein localises to the secreted. It localises to the cytoplasmic vesicle. The protein resides in the secretory vesicle. Its subcellular location is the neuronal dense core vesicle. Functionally, strongly inhibits glucose induced insulin release from the pancreas. In terms of biological role, inhibits low calcium-stimulated parathyroid cell secretion. Its function is as follows. Inhibits catecholamine release from chromaffin cells and noradrenergic neurons by acting as a non-competitive nicotinic cholinergic antagonist. Can induce mast cell migration, degranulation and production of cytokines and chemokines. Regulates granule biogenesis in endocrine cells by up-regulating the transcription of protease nexin 1 (SERPINE2) via a cAMP-PKA-SP1 pathway. This leads to inhibition of granule protein degradation in the Golgi complex which in turn promotes granule formation. This Sus scrofa (Pig) protein is Chromogranin-A (CHGA).